A 241-amino-acid polypeptide reads, in one-letter code: Lactate utilization protein C (241 aa).

Belongs to the LutC/YkgG family.

Is involved in L-lactate degradation and allows cells to grow with lactate as the sole carbon source. The sequence is that of Lactate utilization protein C from Geobacillus sp. (strain WCH70).